We begin with the raw amino-acid sequence, 352 residues long: Threonine synthase (352 aa).

Lys59 carries the post-translational modification N6-(pyridoxal phosphate)lysine. Residues Asn85, 185–189 (GNAGN), and Thr314 each bind pyridoxal 5'-phosphate.

It belongs to the threonine synthase family. Requires pyridoxal 5'-phosphate as cofactor.

The catalysed reaction is O-phospho-L-homoserine + H2O = L-threonine + phosphate. It functions in the pathway amino-acid biosynthesis; L-threonine biosynthesis; L-threonine from L-aspartate: step 5/5. Catalyzes the gamma-elimination of phosphate from L-phosphohomoserine and the beta-addition of water to produce L-threonine. The protein is Threonine synthase (thrC) of Bacillus subtilis (strain 168).